A 63-amino-acid polypeptide reads, in one-letter code: Large ribosomal subunit protein bL35 (63 aa).

Belongs to the bacterial ribosomal protein bL35 family.

In Campylobacter jejuni subsp. doylei (strain ATCC BAA-1458 / RM4099 / 269.97), this protein is Large ribosomal subunit protein bL35.